We begin with the raw amino-acid sequence, 293 residues long: Elongation factor Ts (293 aa).

The tract at residues 80 to 83 is involved in Mg(2+) ion dislocation from EF-Tu; that stretch reads TDFV.

This sequence belongs to the EF-Ts family.

The protein localises to the cytoplasm. Its function is as follows. Associates with the EF-Tu.GDP complex and induces the exchange of GDP to GTP. It remains bound to the aminoacyl-tRNA.EF-Tu.GTP complex up to the GTP hydrolysis stage on the ribosome. In Burkholderia cenocepacia (strain HI2424), this protein is Elongation factor Ts.